The chain runs to 64 residues: Translation machinery-associated protein 7 homolog (64 aa).

The segment at 1–64 (MSGREGGKKK…QGGIKKSGKK (64 aa)) is disordered. Basic and acidic residues predominate over residues 27-44 (VAFKQKQKEQQKALDAAK).

The protein belongs to the TMA7 family.

The chain is Translation machinery-associated protein 7 homolog from Anopheles funestus (African malaria mosquito).